The following is a 438-amino-acid chain: Aminopeptidase E (438 aa).

Catalysis depends on residues Cys70, His362, and Asn383.

It belongs to the peptidase C1 family.

It localises to the cytoplasm. Can hydrolyze internal peptide bonds in Met-enkephalin and bradykinin; however, hydrolysis of alpha-, beta-, and kappa-caseins is not detected. In Lactobacillus helveticus (Lactobacillus suntoryeus), this protein is Aminopeptidase E (pepE).